An 89-amino-acid polypeptide reads, in one-letter code: Small ribosomal subunit protein uS15 (89 aa).

The protein belongs to the universal ribosomal protein uS15 family. In terms of assembly, part of the 30S ribosomal subunit. Forms a bridge to the 50S subunit in the 70S ribosome, contacting the 23S rRNA.

Its function is as follows. One of the primary rRNA binding proteins, it binds directly to 16S rRNA where it helps nucleate assembly of the platform of the 30S subunit by binding and bridging several RNA helices of the 16S rRNA. Forms an intersubunit bridge (bridge B4) with the 23S rRNA of the 50S subunit in the ribosome. The sequence is that of Small ribosomal subunit protein uS15 from Parafrankia sp. (strain EAN1pec).